The following is a 398-amino-acid chain: Elongation factor Tu (398 aa).

The tr-type G domain occupies 10 to 207; it reads KPHVNIGTIG…TVDEYIPEPE (198 aa). A G1 region spans residues 19–26; the sequence is GHVDHGKT. 19–26 serves as a coordination point for GTP; it reads GHVDHGKT. Mg(2+) is bound at residue Thr-26. The interval 63-67 is G2; the sequence is GITIN. The interval 84–87 is G3; sequence DAPG. Residues 84 to 88 and 139 to 142 contribute to the GTP site; these read DAPGH and NKVD. Positions 139 to 142 are G4; the sequence is NKVD. Residues 177 to 179 are G5; it reads SAL.

Belongs to the TRAFAC class translation factor GTPase superfamily. Classic translation factor GTPase family. EF-Tu/EF-1A subfamily. Monomer.

It is found in the cytoplasm. It catalyses the reaction GTP + H2O = GDP + phosphate + H(+). In terms of biological role, GTP hydrolase that promotes the GTP-dependent binding of aminoacyl-tRNA to the A-site of ribosomes during protein biosynthesis. The polypeptide is Elongation factor Tu (Streptococcus suis (strain 98HAH33)).